A 179-amino-acid chain; its full sequence is Large ribosomal subunit protein uL5 (179 aa).

It belongs to the universal ribosomal protein uL5 family. Part of the 50S ribosomal subunit; part of the 5S rRNA/L5/L18/L25 subcomplex. Contacts the 5S rRNA and the P site tRNA. Forms a bridge to the 30S subunit in the 70S ribosome.

Functionally, this is one of the proteins that bind and probably mediate the attachment of the 5S RNA into the large ribosomal subunit, where it forms part of the central protuberance. In the 70S ribosome it contacts protein S13 of the 30S subunit (bridge B1b), connecting the 2 subunits; this bridge is implicated in subunit movement. Contacts the P site tRNA; the 5S rRNA and some of its associated proteins might help stabilize positioning of ribosome-bound tRNAs. This Paramagnetospirillum magneticum (strain ATCC 700264 / AMB-1) (Magnetospirillum magneticum) protein is Large ribosomal subunit protein uL5.